Consider the following 420-residue polypeptide: CinA-like protein (420 aa).

Belongs to the CinA family.

The protein is CinA-like protein of Chloroherpeton thalassium (strain ATCC 35110 / GB-78).